The sequence spans 265 residues: Mlc titration factor A (265 aa).

H111, H148, H152, and E211 together coordinate Zn(2+).

Belongs to the MtfA family. In terms of assembly, interacts with Mlc. The cofactor is Zn(2+).

Its subcellular location is the cytoplasm. Involved in the modulation of the activity of the glucose-phosphotransferase system (glucose-PTS). Interacts with the transcriptional repressor Mlc, preventing its interaction with DNA and leading to the modulation of expression of genes regulated by Mlc, including ptsG, which encodes the PTS system glucose-specific EIICB component. In terms of biological role, shows zinc-dependent metallopeptidase activity. In Klebsiella pneumoniae (strain 342), this protein is Mlc titration factor A.